We begin with the raw amino-acid sequence, 310 residues long: Metal ABC transporter substrate-binding lipoprotein ScbA (310 aa).

An N-terminal signal peptide occupies residues 1 to 19 (MKKCRFLVLLLLAFVGLAA). A lipid anchor (N-palmitoyl cysteine) is attached at Cys-20. Cys-20 is lipidated: S-diacylglycerol cysteine. Positions 68, 140, 206, and 281 each coordinate a divalent metal cation.

The protein belongs to the bacterial solute-binding protein 9 family.

The protein resides in the cell membrane. Functionally, part of an ATP-binding cassette (ABC) transport system involved in metal import. Binds a metal with high affinity and specificity and delivers it to the membrane permease for translocation into the cytoplasm. Part of an ATP-driven transport system for manganese. Does not exhibit adhesion properties. The polypeptide is Metal ABC transporter substrate-binding lipoprotein ScbA (scbA) (Streptococcus cristatus).